A 333-amino-acid polypeptide reads, in one-letter code: DNA-directed RNA polymerase subunit alpha (333 aa).

The tract at residues 1-234 (MQSSVNEFLT…QQLAAFVDLK (234 aa)) is alpha N-terminal domain (alpha-NTD). The segment at 248 to 333 (IDPILLRPVD…SLKKDDKATA (86 aa)) is alpha C-terminal domain (alpha-CTD).

It belongs to the RNA polymerase alpha chain family. Homodimer. The RNAP catalytic core consists of 2 alpha, 1 beta, 1 beta' and 1 omega subunit. When a sigma factor is associated with the core the holoenzyme is formed, which can initiate transcription.

It catalyses the reaction RNA(n) + a ribonucleoside 5'-triphosphate = RNA(n+1) + diphosphate. In terms of biological role, DNA-dependent RNA polymerase catalyzes the transcription of DNA into RNA using the four ribonucleoside triphosphates as substrates. The polypeptide is DNA-directed RNA polymerase subunit alpha (Stutzerimonas stutzeri (strain A1501) (Pseudomonas stutzeri)).